Consider the following 798-residue polypeptide: Protocadherin beta-14 (798 aa).

Residues 1 to 26 (MEIRGALDLRKRQVLIFLVLLGLSRA) form the signal peptide. Residues 27–686 (GTESAHYSVA…APAQAQADSL (660 aa)) are Extracellular-facing. Cadherin domains are found at residues 35-133 (VAEE…SPTF), 138-242 (ILIK…APEF), 247-347 (YEVQ…PPEV), 352-451 (ITKR…APAF), and 456-561 (YTLF…SPFV). Residues Cys-96 and Cys-102 are joined by a disulfide bond. A glycan (N-linked (GlcNAc...) asparagine) is linked at Asn-169. N-linked (GlcNAc...) asparagine glycans are attached at residues Asn-359, Asn-418, and Asn-436. Asn-567 carries an N-linked (GlcNAc...) asparagine glycan. Residues 568-671 (GSAPCTELVP…LVDGFSQPYL (104 aa)) enclose the Cadherin 6 domain. The chain crosses the membrane as a helical span at residues 687–711 (TVYLVVALASVSSLFLFSVLLFVAV). Over 712-798 (RLCRRSRAAS…FRNSFGLNIQ (87 aa)) the chain is Cytoplasmic.

Its subcellular location is the cell membrane. Potential calcium-dependent cell-adhesion protein. May be involved in the establishment and maintenance of specific neuronal connections in the brain. The chain is Protocadherin beta-14 (PCDHB14) from Pan troglodytes (Chimpanzee).